We begin with the raw amino-acid sequence, 583 residues long: Isocitrate dehydrogenase kinase/phosphatase (583 aa).

Residues 315 to 321 and Lys-336 each bind ATP; that span reads APGIRGM. The active site involves Asp-371.

Belongs to the AceK family.

The protein resides in the cytoplasm. The enzyme catalyses L-seryl-[isocitrate dehydrogenase] + ATP = O-phospho-L-seryl-[isocitrate dehydrogenase] + ADP + H(+). Bifunctional enzyme which can phosphorylate or dephosphorylate isocitrate dehydrogenase (IDH) on a specific serine residue. This is a regulatory mechanism which enables bacteria to bypass the Krebs cycle via the glyoxylate shunt in response to the source of carbon. When bacteria are grown on glucose, IDH is fully active and unphosphorylated, but when grown on acetate or ethanol, the activity of IDH declines drastically concomitant with its phosphorylation. In Salmonella enteritidis PT4 (strain P125109), this protein is Isocitrate dehydrogenase kinase/phosphatase.